The following is a 420-amino-acid chain: MSEKRVQPLARDAMAYVLAGGRGSRLKELTDRRAKPAVYFGGKARIIDFALSNALNSGIRRIGVATQYKAHSLIRHLQRGWDFFRPERNESFDILPASQRVSETQWYEGTADAVYQNIDIIEPYAPEYMVILAGDHIYKMDYEYMLQQHVDSGADVTIGCLEVPRMEATGFGVMHVNEKDEIIDFIEKPADPPGIPGNEGFALASMGIYVFHTKFLMEAVRRDAADPTSSRDFGKDIIPYIVEHGKAVAHRFADSCVRSDFEHEPYWRDVGTIDAYWQANIDLTDVVPDLDIYDKSWPIWTYAEITPPAKFVHDDEDRRGSAVSSVVSGDCIISGAALNRSLLFTGVRANSYSRLENAVVLPSVKIGRHAQLSNVVIDHGVVIPEGLIVGEDPELDAKRFRRTESGICLITQSMIDKLDL.

Alpha-D-glucose 1-phosphate is bound by residues Tyr-107, Gly-172, 187–188, and Ser-205; that span reads EK.

Belongs to the bacterial/plant glucose-1-phosphate adenylyltransferase family. In terms of assembly, homotetramer.

It catalyses the reaction alpha-D-glucose 1-phosphate + ATP + H(+) = ADP-alpha-D-glucose + diphosphate. Its pathway is glycan biosynthesis; glycogen biosynthesis. Functionally, involved in the biosynthesis of ADP-glucose, a building block required for the elongation reactions to produce glycogen. Catalyzes the reaction between ATP and alpha-D-glucose 1-phosphate (G1P) to produce pyrophosphate and ADP-Glc. This Rhizobium radiobacter (Agrobacterium tumefaciens) protein is Glucose-1-phosphate adenylyltransferase.